The primary structure comprises 343 residues: Inositol 2-dehydrogenase 1 (343 aa).

This sequence belongs to the Gfo/Idh/MocA family. As to quaternary structure, homotetramer.

It catalyses the reaction myo-inositol + NAD(+) = scyllo-inosose + NADH + H(+). Involved in the oxidation of myo-inositol (MI) to 2-keto-myo-inositol (2KMI or 2-inosose). This chain is Inositol 2-dehydrogenase 1, found in Mycolicibacterium vanbaalenii (strain DSM 7251 / JCM 13017 / BCRC 16820 / KCTC 9966 / NRRL B-24157 / PYR-1) (Mycobacterium vanbaalenii).